The primary structure comprises 518 residues: Major facilitator superfamily multidrug transporter mfsC (518 aa).

A run of 7 helical transmembrane segments spans residues Val-27–Phe-47, Trp-65–Gly-85, Phe-88–Asn-108, Ile-123–Phe-143, Ala-152–Ser-172, Ile-183–Pro-203, and Pro-212–Leu-232. An N-linked (GlcNAc...) asparagine glycan is attached at Asn-233. Transmembrane regions (helical) follow at residues Ser-242 to Val-262, Phe-281 to Ile-301, Ile-315 to Ala-335, Ile-347 to Pro-367, Thr-380 to Leu-400, Ala-409 to Gly-429, and Ala-455 to Trp-475.

This sequence belongs to the major facilitator superfamily. EmrB family.

It is found in the membrane. Functionally, major facilitator superfamily transporter that may be involved in A.fumigatus adaptation to azoles such as vorizonazole. This chain is Major facilitator superfamily multidrug transporter mfsC, found in Aspergillus fumigatus (strain ATCC MYA-4609 / CBS 101355 / FGSC A1100 / Af293) (Neosartorya fumigata).